The following is an 88-amino-acid chain: Small ribosomal subunit protein uS17 (88 aa).

The protein belongs to the universal ribosomal protein uS17 family. In terms of assembly, part of the 30S ribosomal subunit.

Functionally, one of the primary rRNA binding proteins, it binds specifically to the 5'-end of 16S ribosomal RNA. This chain is Small ribosomal subunit protein uS17, found in Ligilactobacillus salivarius (strain UCC118) (Lactobacillus salivarius).